Here is a 421-residue protein sequence, read N- to C-terminus: Glutamate-1-semialdehyde 2,1-aminomutase 1 (421 aa).

Position 258 is an N6-(pyridoxal phosphate)lysine (K258).

This sequence belongs to the class-III pyridoxal-phosphate-dependent aminotransferase family. HemL subfamily. Pyridoxal 5'-phosphate serves as cofactor.

It localises to the cytoplasm. It catalyses the reaction (S)-4-amino-5-oxopentanoate = 5-aminolevulinate. It participates in porphyrin-containing compound metabolism; protoporphyrin-IX biosynthesis; 5-aminolevulinate from L-glutamyl-tRNA(Glu): step 2/2. The sequence is that of Glutamate-1-semialdehyde 2,1-aminomutase 1 from Cenarchaeum symbiosum (strain A).